The primary structure comprises 219 residues: Small ribosomal subunit protein uS3c (219 aa).

The region spanning 43 to 118 is the KH type-2 domain; the sequence is IKNYVQNNMI…KLNITITRIE (76 aa).

The protein belongs to the universal ribosomal protein uS3 family. In terms of assembly, part of the 30S ribosomal subunit.

Its subcellular location is the plastid. The chain is Small ribosomal subunit protein uS3c (rps3) from Cuscuta exaltata (Tall dodder).